The following is a 414-amino-acid chain: Esterase FrsA (414 aa).

The protein belongs to the FrsA family.

The enzyme catalyses a carboxylic ester + H2O = an alcohol + a carboxylate + H(+). Its function is as follows. Catalyzes the hydrolysis of esters. In Escherichia coli O81 (strain ED1a), this protein is Esterase FrsA.